A 212-amino-acid chain; its full sequence is Actin-depolymerizing factor 1, isoforms a/b (212 aa).

In terms of domain architecture, ADF-H spans 3-159 (SGVMVDPDVQ…SHKELLNNCP (157 aa)).

It belongs to the actin-binding proteins ADF family. As to quaternary structure, interacts with F-actin.

In terms of biological role, depolymerizes growing actin filaments in muscle cells; required for the assembly of actin filaments into the functional contractile myofilament lattice of muscle. Competes with unc-87 for actin binding and inhibits the actin-bundling activity of unc-87. This is Actin-depolymerizing factor 1, isoforms a/b from Caenorhabditis elegans.